We begin with the raw amino-acid sequence, 386 residues long: Glucose-1-phosphate adenylyltransferase (386 aa).

Residues Tyr-99, Gly-164, 179–180, and Ser-190 each bind alpha-D-glucose 1-phosphate; that span reads EK.

It belongs to the bacterial/plant glucose-1-phosphate adenylyltransferase family. As to quaternary structure, homotetramer.

The catalysed reaction is alpha-D-glucose 1-phosphate + ATP + H(+) = ADP-alpha-D-glucose + diphosphate. It functions in the pathway glycan biosynthesis; glycogen biosynthesis. Involved in the biosynthesis of ADP-glucose, a building block required for the elongation reactions to produce glycogen. Catalyzes the reaction between ATP and alpha-D-glucose 1-phosphate (G1P) to produce pyrophosphate and ADP-Glc. In Clostridioides difficile (strain 630) (Peptoclostridium difficile), this protein is Glucose-1-phosphate adenylyltransferase.